We begin with the raw amino-acid sequence, 304 residues long: tRNA-5-methyluridine(54) 2-sulfurtransferase (304 aa).

Zn(2+)-binding residues include cysteine 3, cysteine 6, cysteine 22, and histidine 25. Alanine 53 and isoleucine 79 together coordinate ATP. Residues cysteine 131 and cysteine 134 each contribute to the [4Fe-4S] cluster site. The ATP site is built by arginine 138 and glycine 157. A [4Fe-4S] cluster-binding site is contributed by cysteine 224. Positions 274, 277, 286, and 289 each coordinate Zn(2+).

It belongs to the TtcA family. TtuA subfamily. In terms of assembly, homodimer. The cofactor is [4Fe-4S] cluster. It depends on Mg(2+) as a cofactor.

It catalyses the reaction 5-methyluridine(54) in tRNA + hydrogen sulfide + ATP = 5-methyl-2-thiouridine(54) in tRNA + AMP + diphosphate. Its pathway is tRNA modification. Functionally, catalyzes the ATP-dependent 2-thiolation of 5-methyluridine residue at position 54 in the T loop of tRNAs, leading to 5-methyl-2-thiouridine (m(5)s(2)U or s(2)T). This modification allows thermal stabilization of tRNAs in thermophilic microorganisms, and is required for cell growth at high temperatures. Can use free sulfide as sulfur source in vitro. The polypeptide is tRNA-5-methyluridine(54) 2-sulfurtransferase (Thermotoga maritima (strain ATCC 43589 / DSM 3109 / JCM 10099 / NBRC 100826 / MSB8)).